The sequence spans 347 residues: Ataxin-7-like protein 3 (347 aa).

The SGF11-type zinc finger occupies 84 to 105 (CVCPNCSRSIAASRFAPHLEKC). The segment covering 116 to 125 (ANRRIANSNN) has biased composition (low complexity). A disordered region spans residues 116–184 (ANRRIANSNN…GELSNSDPFK (69 aa)). Phosphoserine is present on residues S129 and S131. Acidic residues predominate over residues 132 to 141 (DQEDNDDIND). In terms of domain architecture, SCA7 spans 196–263 (LGPEELRSLL…SLDNDGFDMT (68 aa)). Over residues 275–288 (DGSSDLSPSDSGSS) the composition is skewed to low complexity. The interval 275–347 (DGSSDLSPSD…PTPSIYDDIN (73 aa)) is disordered. Phosphoserine occurs at positions 278, 281, and 326.

This sequence belongs to the SGF11 family. Component of some SAGA transcription coactivator-HAT complexes, at least composed of ATXN7, ATXN7L3, ENY2, GCN5L2, SUPT3H, TAF10, TRRAP and USP22. Within the SAGA complex, ENY2, ATXN7, ATXN7L3, and USP22 form an additional subcomplex of SAGA called the DUB module (deubiquitination module). Interacts directly with ENY2 and USP22.

The protein localises to the nucleus. Its function is as follows. Component of the transcription regulatory histone acetylation (HAT) complex SAGA, a multiprotein complex that activates transcription by remodeling chromatin and mediating histone acetylation and deubiquitination. Within the SAGA complex, participates in a subcomplex that specifically deubiquitinates both histones H2A and H2B. The SAGA complex is recruited to specific gene promoters by activators such as MYC, where it is required for transcription. Required for nuclear receptor-mediated transactivation. Within the complex, it is required to recruit USP22 and ENY2 into the SAGA complex. Regulates H2B monoubiquitination (H2Bub1) levels. Affects subcellular distribution of ENY2, USP22 and ATXN7L3B. The protein is Ataxin-7-like protein 3 (Atxn7l3) of Mus musculus (Mouse).